The primary structure comprises 71 residues: Small ribosomal subunit protein bS21 (71 aa).

Belongs to the bacterial ribosomal protein bS21 family.

This is Small ribosomal subunit protein bS21 from Alteromonas mediterranea (strain DSM 17117 / CIP 110805 / LMG 28347 / Deep ecotype).